Consider the following 171-residue polypeptide: Replication restart protein PriC (171 aa).

This sequence belongs to the PriC family. In terms of assembly, monomer. Component of the replication restart primosome, which is composed of PriA, PriB, PriC, DnaBe and DnaT; DnaG primase associates transiently with this complex. Interacts with the C-terminus of SSB. SSB interaction is required to load the main replicative helicase onto substrate replication forks. Interacts with helicase DnaB alone and in the DnaB-DnaC complex, probably 1:1 binding with DnaB.

In terms of biological role, involved in the restart of stalled replication forks, which reloads the DnaB replicative helicase on sites other than the origin of replication. In vitro can load (E.coli) DnaB replicative helicase from a DnaB-DnaC complex on a single-stranded DNA (ssDNA)-binding protein (SSB)-coated stalled replication fork with no leading- or lagging-strand in the absence of other primosome proteins (PriA, PriB or DnaT). Binds SSB (tested with E.coli protein) and ssDNA. Complements priC in an E.coli priB-priC double deletion. The sequence is that of Replication restart protein PriC from Cronobacter sakazakii (strain ATCC BAA-894) (Enterobacter sakazakii).